The following is a 1183-amino-acid chain: DNA-directed RNA polymerase subunit beta (1183 aa).

Residues 1153–1162 show a composition bias toward acidic residues; that stretch reads DMQDNEEEDV. The segment at 1153–1183 is disordered; that stretch reads DMQDNEEEDVVERKVDLQQKDAPQSQKEVTD. A compositionally biased stretch (polar residues) spans 1173 to 1183; sequence DAPQSQKEVTD.

The protein belongs to the RNA polymerase beta chain family. The RNAP catalytic core consists of 2 alpha, 1 beta, 1 beta' and 1 omega subunit. When a sigma factor is associated with the core the holoenzyme is formed, which can initiate transcription.

It carries out the reaction RNA(n) + a ribonucleoside 5'-triphosphate = RNA(n+1) + diphosphate. Its function is as follows. DNA-dependent RNA polymerase catalyzes the transcription of DNA into RNA using the four ribonucleoside triphosphates as substrates. This Staphylococcus saprophyticus subsp. saprophyticus (strain ATCC 15305 / DSM 20229 / NCIMB 8711 / NCTC 7292 / S-41) protein is DNA-directed RNA polymerase subunit beta.